A 371-amino-acid chain; its full sequence is MGIIFYTTQMPNFEQNQVIAVGLSGGVDSSVAALVLKEKGYEVIGLFMQNWETDSKDPFCTAEQDLSDAKAIADHIGIPLYVVNFSKAYWNHVFQHCLDEFAQGRTPNPDVWCNREIKFKSLLDHAKKLGATHLATGHYACIQNENNEYRLLKSNDSHKDQSYFLHLLNQYQLANSVFPIGGYQKSEVRAIAKKRGFINHAKKDSTGICFIGERKFKDFLNEFLLAQPGNIETSEGKIIGKHDGIMFYTVGQRKGLHIGGRPDAGEAPWYVVDKDVKRNVLIVVQGYEHPLLYSQELTCTNLHWIRDTEPSFPLTCKAKTRCRQADQTCVVTRLDNDHCHVQFEHPQRAITRGQSVVFYLGNECLGGGIIN.

ATP contacts are provided by residues 22-29 (GLSGGVDS) and Met-48. An interaction with target base in tRNA region spans residues 108-110 (NPD). Cys-113 functions as the Nucleophile in the catalytic mechanism. Cys-113 and Cys-209 are joined by a disulfide. Residue Gly-137 coordinates ATP. An interaction with tRNA region spans residues 159–161 (KDQ). Cys-209 serves as the catalytic Cysteine persulfide intermediate.

Belongs to the MnmA/TRMU family.

Its subcellular location is the cytoplasm. The catalysed reaction is S-sulfanyl-L-cysteinyl-[protein] + uridine(34) in tRNA + AH2 + ATP = 2-thiouridine(34) in tRNA + L-cysteinyl-[protein] + A + AMP + diphosphate + H(+). Catalyzes the 2-thiolation of uridine at the wobble position (U34) of tRNA, leading to the formation of s(2)U34. The chain is tRNA-specific 2-thiouridylase MnmA from Coxiella burnetii (strain CbuG_Q212) (Coxiella burnetii (strain Q212)).